The chain runs to 511 residues: Immunoglobulin-binding protein EibD (511 aa).

The signal sequence occupies residues 1 to 26 (MSKKFTMTLLSSSLAGLLVMSGGVSA). The segment at 27–417 (QNGTYSVLQD…SKAIAANTRT (391 aa)) is surface exposed passenger domain. Topologically, residues 27-460 (QNGTYSVLQD…GLFQPYSVGK (434 aa)) are extracellular. The head domain stretch occupies residues 161–287 (DAKASGEFSV…TGTESDKTYG (127 aa)). The tract at residues 288 to 303 (TRVLGGLSDGTRNSDA) is neck. The tract at residues 304–349 (ATVGQLNRKVGGVYDDVKARITVESEKQKKYTDQKTSEVNEKVEAR) is right-handed coiled-coil (RHcc). Residues 304-349 (ATVGQLNRKVGGVYDDVKARITVESEKQKKYTDQKTSEVNEKVEAR) adopt a coiled-coil conformation. Positions 329–344 (EKQKKYTDQKTSEVNE) are required to bind IgA. Residues 350 to 375 (TTVGVDSDGKLTRAEGATKTIAVNDG) form a saddle domain region. Residues 376–441 (LVALSGRTDR…INENHKEMKR (66 aa)) adopt a coiled-coil conformation. The left-handed coiled-coil (LHcc) stretch occupies residues 376–441 (LVALSGRTDR…INENHKEMKR (66 aa)). Residues 384–418 (DRIDYAVGAIDGRVTRNTQSIEKNSKAIAANTRTL) are required to bind IgG. Residues 418–460 (LQQHSARLDSQQRQINENHKEMKRAAAQSAALTGLFQPYSVGK) form an outer membrane translocation of the passenger domain region. Transmembrane regions (beta stranded) follow at residues 461-471 (FNATAAVGGYS), 474-485 (QALAVGVGYRFN), 488-497 (TAAKAGVAFS), and 501-511 (ASWNVGVNFEF). The interval 461–511 (FNATAAVGGYSDQQALAVGVGYRFNEQTAAKAGVAFSDGDASWNVGVNFEF) is translocator domain.

It belongs to the autotransporter-2 (AT-2) (TC 1.B.40) family. Eib subfamily. As to quaternary structure, homotrimer; can probably form mixed heterotrimers in vivo. Will form mixed heterotrimers with EibA or EibC; these are correctly located in the outer membrane and bind IgG Fc, although less well than homotrimers. In denaturing gels runs as a band of about 210 kDa. Binds the Fc portion of immunoglobulins; binds more than 1 Fc per subunit, can be modeled to bind 3 Fc per trimer.

It is found in the cell surface. Its subcellular location is the cell outer membrane. Binds (in a non-immune fashion) to the Fc portion of human IgA and IgG; binding occurs on the cell surface. Confers the ability to survive exposure to human serum exposure. Binds to the Fc portion of human IgG, IgA and to whole mouse antibodies also via Fc. Upon overexpression cells acquire an extra cell surface layer that forms a zipper-like contact between cells; cells autoagglutinate and form biofilm more readily, suggesting it may play a role in defense against a host. The sequence is that of Immunoglobulin-binding protein EibD from Escherichia coli.